Here is a 549-residue protein sequence, read N- to C-terminus: MAKIIKFDQEGRNAFLKGVNTLADAVKVTLGPKGRNVVIEKSFGAPLITKDGVTVAKEIELDDKFENMGAQLVKEVASKTSDVAGDGTTTATVLAQAIYRQGAKLVAAGHNPMEIKRGIDKAVETLVAELKNISKPIKDHKEIAQVGTISANNDKTIGDIIAEAMEKVGKEGVITVEEAKAMETTLETVEGMQFDRGYLSPYFVTDPERMEATLENANILIHDKKISNMKDLLPVLEQTAKSGRPLIIIAEDIEGEALATLVVNKLRGVLNICAVKAPGFGDRRKAMLEDIAVLTGGKVISEEIGFKLENTTMDMLGQAKKITVDKDNTTIIDGAGSEAEIQGRVKMIRAQIEETTSDYDREKLQERLAKLVGGVAVIKVGAATEVEMKEKKARVEDALHATRAAVDEGIVPGGGVAYLRAMSALDSLDLSTEQQFGVNVIKRALEEPIRQIAQNAGVDGSIVVDKVKNGKDAFGYNAADDEYVDMIQAGIIDPTKVSRSALQNASSIAGLMLTTEAMIADKPKEEGSMPAMPGGMGGMGGMGGMGGMM.

Residues T29–P32, K50, D86–T90, G414, N477–A479, and D493 each bind ATP.

Belongs to the chaperonin (HSP60) family. As to quaternary structure, forms a cylinder of 14 subunits composed of two heptameric rings stacked back-to-back. Interacts with the co-chaperonin GroES.

The protein localises to the cytoplasm. The enzyme catalyses ATP + H2O + a folded polypeptide = ADP + phosphate + an unfolded polypeptide.. Its function is as follows. Together with its co-chaperonin GroES, plays an essential role in assisting protein folding. The GroEL-GroES system forms a nano-cage that allows encapsulation of the non-native substrate proteins and provides a physical environment optimized to promote and accelerate protein folding. This is Chaperonin GroEL from Geotalea uraniireducens (strain Rf4) (Geobacter uraniireducens).